A 340-amino-acid polypeptide reads, in one-letter code: MVTLRKRTLKVLTFLVLFIFLTSFFLNYSHTMVATTWFPKQMVLELSENLKRLIKHRPCTCTHCIGQRKLSAWFDERFNQTMQPLLTAQNALLEDDTYRWWLRLQREKKPNNLNDTIKELFRVVPGNVDPMLEKRSVGCRRCAVVGNSGNLRESSYGPEIDSHDFVLRMNKAPTAGFEADVGTKTTHHLVYPESFRELGDNVSMILVPFKTIDLEWVVSAITTGTISHTYIPVPAKIRVKQDKILIYHPAFIKYVFDNWLQGHGRYPSTGILSVIFSMHVCDEVDLYGFGADSKGNWHHYWENNPSAGAFRKTGVHDADFESNVTATLASINKIRIFKGR.

Residues 1–13 (MVTLRKRTLKVLT) lie on the Cytoplasmic side of the membrane. The chain crosses the membrane as a helical; Signal-anchor for type II membrane protein span at residues 14–34 (FLVLFIFLTSFFLNYSHTMVA). Residues 35-340 (TTWFPKQMVL…INKIRIFKGR (306 aa)) lie on the Lumenal side of the membrane. Disulfide bonds link Cys-59-Cys-64, Cys-61-Cys-139, and Cys-142-Cys-281. Residue Asn-79 is glycosylated (N-linked (GlcNAc...) asparagine). Position 105 (Gln-105) interacts with substrate. Residue Asn-114 is glycosylated (N-linked (GlcNAc...) asparagine). Substrate is bound by residues Asn-147 and Asn-170. N-linked (GlcNAc...) asparagine glycosylation occurs at Asn-201. Positions 230, 266, 270, 290, 299, and 316 each coordinate substrate. N-linked (GlcNAc...) asparagine glycosylation is present at Asn-323.

Belongs to the glycosyltransferase 29 family. In terms of processing, the soluble form derives from the membrane form by proteolytic processing. In terms of tissue distribution, expressed in several tissues. Highest expression in lung, liver, skeletal muscle, kidney, pancreas, spleen and placenta.

The protein resides in the golgi apparatus. It is found in the golgi stack membrane. Its subcellular location is the trans-Golgi network membrane. The protein localises to the secreted. The catalysed reaction is a beta-D-galactosyl-(1-&gt;3)-N-acetyl-alpha-D-galactosaminyl derivative + CMP-N-acetyl-beta-neuraminate = an N-acetyl-alpha-neuraminyl-(2-&gt;3)-beta-D-galactosyl-(1-&gt;3)-N-acetyl-alpha-D-galactosaminyl derivative + CMP + H(+). It carries out the reaction a ganglioside GM1 + CMP-N-acetyl-beta-neuraminate = a ganglioside GD1a + CMP + H(+). It catalyses the reaction a ganglioside GM1 (d18:1(4E)) + CMP-N-acetyl-beta-neuraminate = a ganglioside GD1a (d18:1(4E)) + CMP + H(+). The enzyme catalyses ganglioside GM1 (d18:1(4E)/18:0) + CMP-N-acetyl-beta-neuraminate = ganglioside GD1a (18:1(4E)/18:0) + CMP + H(+). The catalysed reaction is a ganglioside GA1 + CMP-N-acetyl-beta-neuraminate = a ganglioside GM1b + CMP + H(+). It carries out the reaction a ganglioside GA1 (d18:1(4E)) + CMP-N-acetyl-beta-neuraminate = a ganglioside GM1b (d18:1(4E)) + CMP + H(+). It catalyses the reaction a ganglioside GD1b + CMP-N-acetyl-beta-neuraminate = a ganglioside GT1b + CMP + H(+). The enzyme catalyses a 3-O-[beta-D-galactosyl-(1-&gt;3)-N-acetyl-alpha-D-galactosaminyl]-L-threonyl-[protein] + CMP-N-acetyl-beta-neuraminate = a 3-O-[N-acetyl-alpha-neuraminyl-(2-&gt;3)-beta-D-galactosyl-(1-&gt;3)-N-acetyl-alpha-D-galactosaminyl]-L-threonyl-[protein] + CMP + H(+). The catalysed reaction is a 3-O-[beta-D-galactosyl-(1-&gt;3)-N-acetyl-alpha-D-galactosaminyl]-L-seryl-[protein] + CMP-N-acetyl-beta-neuraminate = 3-O-[N-acetyl-alpha-neuraminyl-(2-&gt;3)-beta-D-galactosyl-(1-&gt;3)-N-acetyl-alpha-D-galactosaminyl]-L-seryl-[protein] + CMP + H(+). Its pathway is protein modification; protein glycosylation. It participates in glycolipid biosynthesis. Its function is as follows. A beta-galactoside alpha2-&gt;3 sialyltransferase involved in terminal sialylation of glycoproteins and glycolipids. Catalyzes the transfer of sialic acid (N-acetyl-neuraminic acid; Neu5Ac) from the nucleotide sugar donor CMP-Neu5Ac onto acceptor Galbeta-(1-&gt;3)-GalNAc-terminated glycoconjugates through an alpha2-3 linkage. Adds sialic acid to the core 1 O-glycan, Galbeta-(1-&gt;3)-GalNAc-O-Ser/Thr, which is a major structure of mucin-type O-glycans. As part of a homeostatic mechanism that regulates CD8-positive T cell numbers, sialylates core 1 O-glycans of T cell glycoproteins, SPN/CD43 and PTPRC/CD45. Prevents premature apoptosis of thymic CD8-positive T cells prior to peripheral emigration, whereas in the secondary lymphoid organs controls the survival of CD8-positive memory T cells generated following a successful immune response. Transfers sialic acid to asialofetuin, presumably onto Galbeta-(1-&gt;3)-GalNAc-O-Ser. Sialylates GM1a, GA1 and GD1b gangliosides to form GD1a, GM1b and GT1b, respectively. The chain is CMP-N-acetylneuraminate-beta-galactosamide-alpha-2,3-sialyltransferase 1 from Homo sapiens (Human).